The primary structure comprises 296 residues: Ribosomal RNA small subunit methyltransferase A (296 aa).

S-adenosyl-L-methionine contacts are provided by Asn-31, Leu-33, Gly-58, Glu-79, Asp-111, and Asn-136.

The protein belongs to the class I-like SAM-binding methyltransferase superfamily. rRNA adenine N(6)-methyltransferase family. RsmA subfamily.

The protein localises to the cytoplasm. It catalyses the reaction adenosine(1518)/adenosine(1519) in 16S rRNA + 4 S-adenosyl-L-methionine = N(6)-dimethyladenosine(1518)/N(6)-dimethyladenosine(1519) in 16S rRNA + 4 S-adenosyl-L-homocysteine + 4 H(+). Specifically dimethylates two adjacent adenosines (A1518 and A1519) in the loop of a conserved hairpin near the 3'-end of 16S rRNA in the 30S particle. May play a critical role in biogenesis of 30S subunits. The protein is Ribosomal RNA small subunit methyltransferase A of Lactobacillus johnsonii (strain CNCM I-12250 / La1 / NCC 533).